Here is a 561-residue protein sequence, read N- to C-terminus: Oligo-1,6-glucosidase 1 (561 aa).

Residues aspartate 20, asparagine 22, aspartate 24, phenylalanine 26, and aspartate 28 each coordinate Ca(2+). Catalysis depends on aspartate 199, which acts as the Nucleophile. Catalysis depends on glutamate 255, which acts as the Proton donor.

This sequence belongs to the glycosyl hydrolase 13 family.

It is found in the cytoplasm. The catalysed reaction is Hydrolysis of (1-&gt;6)-alpha-D-glucosidic linkages in some oligosaccharides produced from starch and glycogen by alpha-amylase, and in isomaltose.. Its function is as follows. Hydrolyzes various disaccharides such as sucrose, maltose, and isomaltose with different efficiencies. Also hydrolyzes longer maltodextrins from maltotriose up to maltohexaose, but not maltoheptaose, palatinose, isomaltotriose, or isomaltotetraose. This is Oligo-1,6-glucosidase 1 (malL) from Bacillus subtilis (strain 168).